A 749-amino-acid polypeptide reads, in one-letter code: G-type lectin S-receptor-like serine/threonine-protein kinase At1g61460 (749 aa).

Residues Met-1–Ala-25 form the signal peptide. The 120-residue stretch at Gly-26–Phe-145 folds into the Bulb-type lectin domain. Over Gly-26–Thr-392 the chain is Extracellular. N-linked (GlcNAc...) asparagine glycosylation is found at Asn-54, Asn-95, Asn-118, and Asn-135. Residues Pro-247–Glu-280 form the EGF-like; atypical domain. 2 cysteine pairs are disulfide-bonded: Cys-251–Cys-263 and Cys-257–Cys-268. Residues Asn-286, Asn-302, and Asn-341 are each glycosylated (N-linked (GlcNAc...) asparagine). Residues Cys-299–Arg-381 enclose the PAN domain. 2 cysteine pairs are disulfide-bonded: Cys-334-Cys-355 and Cys-338-Cys-344. A helical transmembrane segment spans residues Ile-393–Phe-413. Residues Trp-414 to Arg-749 lie on the Cytoplasmic side of the membrane. One can recognise a Protein kinase domain in the interval Phe-454 to Phe-721. ATP contacts are provided by residues Leu-460–Val-468 and Lys-482. The tract at residues Arg-543–Ile-560 is caM-binding. The active-site Proton acceptor is the Asp-579.

This sequence belongs to the protein kinase superfamily. Ser/Thr protein kinase family.

The protein resides in the cell membrane. It catalyses the reaction L-seryl-[protein] + ATP = O-phospho-L-seryl-[protein] + ADP + H(+). It carries out the reaction L-threonyl-[protein] + ATP = O-phospho-L-threonyl-[protein] + ADP + H(+). In Arabidopsis thaliana (Mouse-ear cress), this protein is G-type lectin S-receptor-like serine/threonine-protein kinase At1g61460.